A 492-amino-acid polypeptide reads, in one-letter code: MEPEAPDSRKRPLETPPEVVCTKRSNTGEEGEYFLKVLIPSYAAGSIIGKGGQTIVQLQKETGATIKLSKSKDFYPGTTERVCLVQGTAEALNAVHSFIAEKVREIPQAMTKPEVVNILQPQTTMNPDRAKQAKLIVPNSTAGLIIGKGGATVKAVMEQSGAWVQLSQKPEGINLQERVVTVSGEPEQVHKAVSAIVQKVQEDPQSSSCLNISYANVAGPVANSNPTGSPYASPADVLPAAAAASAAAASGLLGPAGLAGVGAFPAALPAFSGTDLLAISTALNTLASYGYNTNSLGLGLNSAAASGVLAAVAAGANPAAAAAANLLASYAGEAGAGPAGGAAPPPPPPPGALGSFALAAAANGYLGAGAGGGAGGGGGPLVAAAAAAGAAGGFLTAEKLAAESAKELVEIAVPENLVGAILGKGGKTLVEYQELTGARIQISKKGEFLPGTRNRRVTITGSPAATQAAQYLISQRVTYEQGVRASNPQKVG.

Residues 10 to 26 (KRPLETPPEVVCTKRSN) carry the Bipartite nuclear localization signal motif. The 68-residue stretch at 32 to 99 (EYFLKVLIPS…EALNAVHSFI (68 aa)) folds into the KH 1 domain. Residue Lys-112 forms a Glycyl lysine isopeptide (Lys-Gly) (interchain with G-Cter in SUMO2) linkage. KH domains are found at residues 130–196 (AKQA…VSAI) and 406–473 (KELV…QYLI).

Interacts with PTBP2; the interaction is direct. Brain. Expression restricted to astrocytes.

It localises to the nucleus. Its function is as follows. Functions to regulate alternative splicing in neurons by binding pre-mRNA in a sequence-specific manner to activate exon inclusion or exclusion. It binds specifically to the sequences 5'-YCAY-3' and regulates splicing in only a subset of regulated exons. Binding to an exonic 5'-YCAY-3' cluster changes the protein complexes assembled on pre-mRNA, blocking U1 snRNP binding and exon inclusion, whereas binding to an intronic 5'-YCAY-3' cluster enhances spliceosome assembly and exon inclusion. With NOVA1, they perform unique biological functions in different brain areas and cell types. Uniquely regulates alternative splicing events of a series of axon guidance related genes during cortical development, being essential for central nervous system development by regulating neural networks wiring. Regulates differentially alternative splicing on the same transcripts expressed in different neurons. This includes functional differences in transcripts expressed in cortical and cerebellar excitatory versus inhibitory neurons where is required for, respectively, development of laminar structure and motor coordination and synapse formation. Also the regulation the regulation of intron retention can sequester the trans-acting splicing factor PTBP2, acting as a variable cis-acting scaffolding platform for PTBP2 across various natural conditions. This chain is RNA-binding protein Nova-2, found in Homo sapiens (Human).